The sequence spans 188 residues: D-glycero-beta-D-manno-heptose-1,7-bisphosphate 7-phosphatase (188 aa).

The active-site Nucleophile is the aspartate 11. Residues aspartate 11 and aspartate 13 each coordinate Mg(2+). Substrate is bound by residues 11-13 (DRD), 19-22 (DHGY), and 53-56 (TNQS). The Proton donor role is filled by aspartate 13. The Zn(2+) site is built by cysteine 92, histidine 94, cysteine 107, and cysteine 109. 110–111 (RK) is a substrate binding site. Mg(2+) is bound by residues aspartate 136 and lysine 137. Lysine 137 serves as a coordination point for substrate.

Belongs to the GmhB family. Monomer. Mg(2+) is required as a cofactor. It depends on Zn(2+) as a cofactor.

The protein resides in the cytoplasm. It catalyses the reaction D-glycero-beta-D-manno-heptose 1,7-bisphosphate + H2O = D-glycero-beta-D-manno-heptose 1-phosphate + phosphate. The protein operates within nucleotide-sugar biosynthesis; ADP-L-glycero-beta-D-manno-heptose biosynthesis; ADP-L-glycero-beta-D-manno-heptose from D-glycero-beta-D-manno-heptose 7-phosphate: step 2/4. Its pathway is bacterial outer membrane biogenesis; LPS core biosynthesis. Functionally, converts the D-glycero-beta-D-manno-heptose 1,7-bisphosphate intermediate into D-glycero-beta-D-manno-heptose 1-phosphate by removing the phosphate group at the C-7 position. The chain is D-glycero-beta-D-manno-heptose-1,7-bisphosphate 7-phosphatase (gmhB) from Yersinia pestis.